Here is a 1142-residue protein sequence, read N- to C-terminus: Probable serine/threonine-protein kinase fhkB (1142 aa).

The segment covering 1–16 (MSQDIQTQNSYSDELY) has biased composition (polar residues). Disordered regions lie at residues 1 to 359 (MSQD…RLSQ), 374 to 404 (NTHTNQLGQSSQQTNSPNVHFNSLQQKKKQQ), and 432 to 451 (QIIGSQSSQSSQLPPTQPPV). 2 stretches are compositionally biased toward low complexity: residues 17–72 (SSQI…FSQN) and 83–157 (QNSY…PSSQ). Positions 158–178 (KRFFQSQNDDFVPSSQVTSLQ) are enriched in polar residues. Positions 186-302 (IQQQQQQQQQ…DYEQENDDDD (117 aa)) form a coiled coil. Positions 187 to 260 (QQQQQQQQQQ…QQTQQQQQQP (74 aa)) are enriched in low complexity. Acidic residues-rich tracts occupy residues 261-277 (QEDDDDYDDYDGYDNYE) and 283-325 (EGEE…EEES). Positions 333–348 (RALQSRSSQSRPLLRS) are enriched in low complexity. Residues 374–397 (NTHTNQLGQSSQQTNSPNVHFNSL) show a composition bias toward polar residues. The stretch at 393–434 (HFNSLQQKKKQQQQQQQQQQQQQQQQQQQQQQQQQQQSQQII) forms a coiled coil. Residues 432 to 443 (QIIGSQSSQSSQ) show a composition bias toward low complexity. Residues 480-551 (IVVGRSSSCD…NGSYINGELI (72 aa)) enclose the FHA domain. Residues 625 to 885 (YYFVKEIGSG…IKEALNHPWF (261 aa)) form the Protein kinase domain. ATP-binding positions include 631-639 (IGSGGYGIV) and Lys-654. Catalysis depends on Asp-747, which acts as the Proton acceptor. A disordered region spans residues 947 to 1142 (FDNNNNNNNN…HQQYTQHTTM (196 aa)). Residues 949-1034 (NNNNNNNNNN…HNHNLNNHNH (86 aa)) are compositionally biased toward low complexity. Over residues 1035-1067 (NNNHHHNHNHNHNHNHNHNHNHNHNHNHNHNHN) the composition is skewed to basic residues. The segment covering 1068–1133 (NHNNNNNNNN…NNINNNNNYH (66 aa)) has biased composition (low complexity). A coiled-coil region spans residues 1090-1132 (NNNNNNNNNNNNNNNNNNNNYYNNNINNINNNINNNINNNNNY).

Belongs to the protein kinase superfamily. CAMK Ser/Thr protein kinase family. CHK2 subfamily.

It carries out the reaction L-seryl-[protein] + ATP = O-phospho-L-seryl-[protein] + ADP + H(+). It catalyses the reaction L-threonyl-[protein] + ATP = O-phospho-L-threonyl-[protein] + ADP + H(+). This is Probable serine/threonine-protein kinase fhkB (fhkB) from Dictyostelium discoideum (Social amoeba).